The sequence spans 529 residues: Bifunctional purine biosynthesis protein PurH (529 aa).

Residues 2–148 (QQLRPIHRAL…KNHKDVAIVV (147 aa)) form the MGS-like domain.

The protein belongs to the PurH family.

It carries out the reaction (6R)-10-formyltetrahydrofolate + 5-amino-1-(5-phospho-beta-D-ribosyl)imidazole-4-carboxamide = 5-formamido-1-(5-phospho-D-ribosyl)imidazole-4-carboxamide + (6S)-5,6,7,8-tetrahydrofolate. The enzyme catalyses IMP + H2O = 5-formamido-1-(5-phospho-D-ribosyl)imidazole-4-carboxamide. Its pathway is purine metabolism; IMP biosynthesis via de novo pathway; 5-formamido-1-(5-phospho-D-ribosyl)imidazole-4-carboxamide from 5-amino-1-(5-phospho-D-ribosyl)imidazole-4-carboxamide (10-formyl THF route): step 1/1. The protein operates within purine metabolism; IMP biosynthesis via de novo pathway; IMP from 5-formamido-1-(5-phospho-D-ribosyl)imidazole-4-carboxamide: step 1/1. This Photorhabdus laumondii subsp. laumondii (strain DSM 15139 / CIP 105565 / TT01) (Photorhabdus luminescens subsp. laumondii) protein is Bifunctional purine biosynthesis protein PurH.